We begin with the raw amino-acid sequence, 274 residues long: Acetylaranotin bis-thiomethyltransferase (274 aa).

It belongs to the class I-like SAM-binding methyltransferase superfamily.

It functions in the pathway mycotoxin biosynthesis. Acetylaranotin bis-thiomethyltransferase involved in the biosynthesis of acetylaranotin derivatives, members of the epipolythiodioxopiperazine (ETP) class of toxins characterized by a disulfide-bridged cyclic dipeptide. The first step of acetylaranotin biosynthesis is performed by the NRPS ataP which produces diketopiperazine cyclo-L-Phe-L-Phe via the condensation of 2 phenylalanines (L-Phe). The ataC domain of ataTC then catalyzes the formation of bishydroxylation of cyclo-L-Phe-L-Phe. The glutathione S-transferase domain ataG in ataIMG further catalyzes the conjugation of two glutathiones to the bishydroxylated intermediate. Next, the dipeptidase ataJ removes the Glu residues. The following step is performed by the carbon sulfur lyase domain ataI of ataIMG which may convert the bis-cysteinyl adduct to yield an epidithiol intermediate. The ataT domain from ataTC then catalyzes the oxidation of the free dithiols, followed by a cyclization step catalyzed by the cytochrome P450 ataF. AtaF probably acts as an epoxidase to promote a dual epoxidation formation at C8 and C9 along with C8' and C9', followed by the spontaneous nucleophilic attack of the amide nitrogens N10 and N10' to yield an intermediate with the pyrrolidine partial structure. The final steps of acetylaranotin biosynthesis involve the acetylation and ring rearrangement of an epitetrathiodiketopiperazine intermediate to produce acetylaranotin. AtaH probably catalyzes the acetylation of epitetrathiodiketopiperazine to produce a diacetate and ataY is responsible for the formation of the dihydrooxepin moiety that converts the diacetate intermediate to acetylaranotin via acetylapoaranotin. Both enzymes could function independently in the absence of the other. The acetylaranotin bis-thiomethyltransferase ataS located outside of acetylaranotin gene cluster is the main thiomethyltransferase responsible for converting acetylaranotin and its related intermediates to their methylated forms. The polypeptide is Acetylaranotin bis-thiomethyltransferase (Aspergillus terreus (strain NIH 2624 / FGSC A1156)).